The chain runs to 742 residues: Two-component response regulator-like PRR37 (742 aa).

Positions 63–181 (KVLLVDSDDS…ELKNLWQHVW (119 aa)) constitute a Response regulatory domain. Low complexity predominate over residues 186–195 (SSSGSGSESG). Disordered stretches follow at residues 186 to 249 (SSSG…SWTK), 290 to 346 (PCTS…PLQN), 377 to 402 (QQAA…NRDN), 478 to 517 (MKSN…NKER), 533 to 568 (FHPA…GEVQ), 590 to 671 (NGGS…GNDM), and 697 to 742 (NFGK…AADR). Over residues 236–248 (DNGSGTQAQSSWT) the composition is skewed to polar residues. Over residues 299-313 (KQKETNDDFKGKDLE) the composition is skewed to basic and acidic residues. A compositionally biased stretch (polar residues) spans 318–330 (RNLNTAYQSSPNE). Positions 331–341 (RSIKPTDRRNE) are enriched in basic and acidic residues. Residues 490–502 (GSNGSSNNNDMGS) show a composition bias toward low complexity. The segment covering 503–512 (TTKNVVTKPS) has biased composition (polar residues). Residues 618-634 (NGSNSGSNNGSNGQNGS) show a composition bias toward low complexity. The segment covering 656–667 (GPGGGNGSGSGS) has biased composition (gly residues). Residues 682–724 (RVAAVIKFRQKRKERNFGKKVRYQSRKRLAEQRPRVRGQFVRQ) form the CCT domain. Residues 697-708 (NFGKKVRYQSRK) show a composition bias toward basic residues. Over residues 719 to 731 (GQFVRQAVQDQQQ) the composition is skewed to low complexity.

The protein belongs to the ARR-like family.

Its subcellular location is the nucleus. Probable transcription factor involved in the regulation of flowering time under long day (LD) conditions. Functions as a repressor of flowering. Controls flowering time by negatively regulating the expression of HD3A. Acts downstream of the phytochrome B to repress the expression of EHD1, an activator of the flowering promoter genes HD3A and RFT1. Controls photoperiodic flowering response. Seems to be one of the component of the circadian clock. Expression of several members of the ARR-like family is controlled by circadian rhythm. The particular coordinated sequential expression of PRR73, PRR37, PRR95, PRR59 and PPR1 result to circadian waves that may be at the basis of the endogenous circadian clock. This Oryza sativa subsp. japonica (Rice) protein is Two-component response regulator-like PRR37.